The primary structure comprises 46 residues: PhoP/PhoQ regulator MgrB (46 aa).

A helical transmembrane segment spans residues 6–26 (WVALVVVVLACLLLWAQVFNM).

It belongs to the MgrB family. As to quaternary structure, may form homooligomers. Probably interacts with the periplasmic domain of PhoQ.

The protein resides in the cell inner membrane. In terms of biological role, phoP-regulated transcription is redox-sensitive, being activated when the periplasm becomes more reducing. MgrB acts between DsbA/DsbB and PhoP/PhoQ in this pathway. Represses PhoP/PhoQ signaling, possibly by binding to the periplasmic domain of PhoQ, altering its activity and that of downstream effector PhoP. The polypeptide is PhoP/PhoQ regulator MgrB (Escherichia coli O6:K15:H31 (strain 536 / UPEC)).